The primary structure comprises 182 residues: Glutathione-regulated potassium-efflux system ancillary protein KefG (182 aa).

It belongs to the NAD(P)H dehydrogenase (quinone) family. KefG subfamily. In terms of assembly, interacts with KefB.

Its subcellular location is the cell inner membrane. The catalysed reaction is a quinone + NADH + H(+) = a quinol + NAD(+). It catalyses the reaction a quinone + NADPH + H(+) = a quinol + NADP(+). Its function is as follows. Regulatory subunit of a potassium efflux system that confers protection against electrophiles. Required for full activity of KefB. This is Glutathione-regulated potassium-efflux system ancillary protein KefG from Yersinia pestis bv. Antiqua (strain Nepal516).